The following is a 219-amino-acid chain: MSDWSDLQKDKWINENREVEEVDAWDASSEDEVEKVEEEIKEPPKPVVKQLTKKQALQRAIELKEKELKEPQGDFDIYLEEKRKKELQEASDLENSKNLFSGLSVKESSSGEPISTFIPKTEKDFEQYSQIVSDYLLKYDSSIHYATFFKSLMKKVLVNVSSSDMNDISKTLTVLINEKLKNEKSGKGGNKTKTKVAPKKIHMGNELQNYDDFDDDDFM.

Acidic residues predominate over residues 22-40 (VDAWDASSEDEVEKVEEEI). Residues 22–47 (VDAWDASSEDEVEKVEEEIKEPPKPV) are disordered. A coiled-coil region spans residues 48–100 (VKQLTKKQALQRAIELKEKELKEPQGDFDIYLEEKRKKELQEASDLENSKNLF).

This sequence belongs to the eIF-3 subunit J family. In terms of assembly, component of the eukaryotic translation initiation factor 3 (eIF-3) complex.

It is found in the cytoplasm. Its function is as follows. Component of the eukaryotic translation initiation factor 3 (eIF-3) complex, which is involved in protein synthesis of a specialized repertoire of mRNAs and, together with other initiation factors, stimulates binding of mRNA and methionyl-tRNAi to the 40S ribosome. The eIF-3 complex specifically targets and initiates translation of a subset of mRNAs involved in cell proliferation. This Dictyostelium discoideum (Social amoeba) protein is Eukaryotic translation initiation factor 3 subunit J (eif3J).